A 470-amino-acid polypeptide reads, in one-letter code: Cannabinoid receptor type 1B (470 aa).

The Extracellular portion of the chain corresponds to 1 to 113; the sequence is MKLALHRIAG…CFMILTPAQQ (113 aa). N-linked (GlcNAc...) asparagine glycans are attached at residues Asn78 and Asn86. Residues 114-139 form a helical membrane-spanning segment; sequence LVIVILAITLGTFTVLENFVVLCVIL. Residues 140-151 lie on the Cytoplasmic side of the membrane; that stretch reads HSHTLRSRPSYH. A helical transmembrane segment spans residues 152–172; it reads FIGSLAVADLIGSIIFVYSFL. Over 173–184 the chain is Extracellular; that stretch reads DFHVLHRKDSPS. Residues 185 to 209 traverse the membrane as a helical segment; sequence IFLFKLAGVIASFTASVGSLFLTAI. Over 210 to 229 the chain is Cytoplasmic; sequence DRYVSIHRPMAYKRIITKTK. A helical membrane pass occupies residues 230–252; it reads AVIAFSVMWAISIEFSLLPLLGW. The Extracellular portion of the chain corresponds to 253-270; the sequence is NCKRLHSVCSDIFPLIDE. The chain crosses the membrane as a helical span at residues 271-296; it reads KYLMFWIGMTTVLLLFIIYAYMFILW. Topologically, residues 297 to 341 are cytoplasmic; sequence KSHHHAVRMLSRSSQRSIIVYTSEGTKVQTVRPEQARMDLRLAKT. The chain crosses the membrane as a helical span at residues 342-362; the sequence is LVLILVALIICWGPLLAIMVY. Residues 363 to 374 lie on the Extracellular side of the membrane; the sequence is DLFGRVNDFIKT. The chain crosses the membrane as a helical span at residues 375-396; that stretch reads VFAFCSMLCLLNSTINPVIYAM. The Cytoplasmic portion of the chain corresponds to 397–470; it reads RSKDLRRAFV…VTASSPAEAV (74 aa). A lipid anchor (S-palmitoyl cysteine) is attached at Cys412. Over residues 418–434 the composition is skewed to polar residues; that stretch reads SLDSSAESDWNSRSVRS. Residues 418–450 form a disordered region; that stretch reads SLDSSAESDWNSRSVRSTGGRAGKDRSVGGKPQ.

Belongs to the G-protein coupled receptor 1 family. Palmitoylation at Cys-412 is important for recruitment at both plasma membrane and lipid rafts and association with G protein alpha subunits.

It is found in the cell membrane. Its subcellular location is the mitochondrion outer membrane. It localises to the cell projection. The protein resides in the axon. The protein localises to the presynapse. Functionally, G-protein coupled receptor for cannabinoids. Mediates many cannabinoid-induced effects in the central nervous system (CNS), as well as in peripheral tissues. Regulates cellular respiration and energy production in response to cannabinoids. Signaling typically involves reduction in cyclic AMP. This Takifugu rubripes (Japanese pufferfish) protein is Cannabinoid receptor type 1B (cnr1b).